The following is a 267-amino-acid chain: X-box-binding protein 1 (267 aa).

The Cytoplasmic segment spans residues 1–180 (MVVVAAAPSA…VQAQLSPPQN (180 aa)). Residues 35 to 60 (VPGPRAAGSEASGTPQARKRQRLTHL) are disordered. Residue S61 is modified to Phosphoserine. In terms of domain architecture, bZIP spans 63 to 126 (EEKALRRKLK…HGLVIENQEL (64 aa)). A basic motif region spans residues 65–87 (KALRRKLKNRVAAQTARDRKKAR). Residues 69 to 85 (RKLKNRVAAQTARDRKK) are nuclear localization signal (NLS). The segment at 91–126 (LEQQVVDLEEENQKLQLENQLLREKTHGLVIENQEL) is leucine-zipper. A helical; Signal-anchor for type II membrane protein membrane pass occupies residues 181 to 198 (IFPWILTLLPLQILSLIS). Residues 199 to 267 (FWAFWTSWTL…FVLTMYTPSL (69 aa)) are Lumenal-facing.

Belongs to the bZIP family. As to quaternary structure, isoform 1 interacts with HM13. Isoform 1 interacts with RNF139; the interaction induces ubiquitination and degradation of isoform 1. Isoform 1 interacts (via luminal domain) with DERL1; the interaction obviates the need for ectodomain shedding prior HM13/SPP-mediated XBP1 isoform 1 cleavage. Isoform 1 interacts with HDAC3 and AKT1; the interactions occur in endothelial cell (EC) under disturbed flow. Isoform 1 interacts with the oncoprotein FOS. Interacts with SIRT1. Isoform 1 is ubiquitinated, leading to proteasome-mediated degradation in response to ER stress. In terms of processing, X-box-binding protein 1, cytoplasmic form and luminal form are produced by intramembrane proteolytic cleavage of ER membrane-anchored isoform 1 triggered by HM13/SPP in a DERL1-RNF139-dependent and VCP/p97-independent manner. X-box-binding protein 1, luminal form is ubiquitinated leading to proteasomal degradation. Post-translationally, acetylated by EP300; acetylation positively regulates the transcriptional activity of XBP1. Deacetylated by SIRT1; deacetylation negatively regulates the transcriptional activity of XBP1.

The protein resides in the nucleus. The protein localises to the endoplasmic reticulum. Its subcellular location is the cytoplasm. It localises to the endoplasmic reticulum membrane. It is found in the membrane. Functions as a transcription factor during endoplasmic reticulum (ER) stress by regulating the unfolded protein response (UPR). Required for cardiac myogenesis and hepatogenesis during embryonic development, and the development of secretory tissues such as exocrine pancreas and salivary gland. Involved in terminal differentiation of B lymphocytes to plasma cells and production of immunoglobulins. Modulates the cellular response to ER stress in a PIK3R-dependent manner. Binds to the cis-acting X box present in the promoter regions of major histocompatibility complex class II genes. Involved in VEGF-induced endothelial cell (EC) proliferation and retinal blood vessel formation during embryonic development but also for angiogenesis in adult tissues under ischemic conditions. Functions also as a major regulator of the UPR in obesity-induced insulin resistance and type 2 diabetes for the management of obesity and diabetes prevention. Its function is as follows. Acts as a weak transcriptional factor. Together with HDAC3, contributes to the activation of NFE2L2-mediated HMOX1 transcription factor gene expression in a PI(3)K/mTORC2/Akt-dependent signaling pathway leading to EC survival under disturbed flow/oxidative stress. Binds to the ER stress response element (ERSE) upon ER stress. Binds to the consensus 5'-GATGACGTG[TG]N(3)[AT]T-3' sequence related to cAMP responsive element (CRE)-like sequences. Associates preferentially to the HDAC3 gene promoter region in a static flow-dependent manner. Binds to the CDH5/VE-cadherin gene promoter region. This Rattus norvegicus (Rat) protein is X-box-binding protein 1.